The following is a 755-amino-acid chain: E3 ubiquitin-protein ligase TRIM56 (755 aa).

The RING-type zinc-finger motif lies at 21–60; sequence CKICLEQLRAPKTLPCLHTYCQDCLAQLADGGRVRCPECR. B box-type zinc fingers lie at residues 98–149 and 164–205; these read KPAC…VVDL and RQAA…CLPL. Zn(2+) contacts are provided by Cys169, His172, Cys192, and His197. Residues 216 to 314 adopt a coiled-coil conformation; sequence LEGLLAGVDN…AAAFARRVLS (99 aa). Positions 371-484 are disordered; the sequence is EEQQPQKDGG…SPALGPNLDG (114 aa). Positions 392–404 are enriched in basic and acidic residues; the sequence is SQSRREDEPKTER. Residues Thr418 and Thr442 each carry the phosphothreonine modification. Positions 419-447 are enriched in basic and acidic residues; sequence PKEEKAQTTREEGAQTLEEDRAQTPHEDG. Basic residues predominate over residues 453–469; it reads RGGRPNKKKKFKGRLKS. Ser475 carries the phosphoserine modification.

It belongs to the TRIM/RBCC family. Homooligomer. Interacts with STING1. Interacts with TICAM1. (Microbial infection) Preferentially ubiquitinated with 'Lys-48' and 'Lys-11'-linked ubiquitin chains by Salmonella effector SopA leading to proteasomal targeting and degradation. In terms of processing, autoubiquitinated. In terms of tissue distribution, widely expressed (at protein level).

The protein localises to the cytoplasm. It carries out the reaction S-ubiquitinyl-[E2 ubiquitin-conjugating enzyme]-L-cysteine + [acceptor protein]-L-lysine = [E2 ubiquitin-conjugating enzyme]-L-cysteine + N(6)-ubiquitinyl-[acceptor protein]-L-lysine.. Its pathway is protein modification; protein ubiquitination. Its function is as follows. E3 ubiquitin-protein ligase that plays a key role in innate antiviral immunity by mediating ubiquitination of CGAS and STING1. In response to pathogen- and host-derived double-stranded DNA (dsDNA), targets STING1 to 'Lys-63'-linked ubiquitination, thereby promoting its homodimerization, a step required for the production of type I interferon IFN-beta. Also mediate monoubiquitination of CGAS, thereby promoting CGAS oligomerization and subsequent activation. Promotes also TNFalpha-induced NF-kappa-B signaling by mediating 'Lys-63'-linked ubiquitination TAK1, leading to enhanced interaction between TAK1 and CHUK/IKKalpha. Independently of its E3 ubiquitin ligase activity, positive regulator of TLR3 signaling. Potentiates extracellular double stranded RNA (dsRNA)-induced expression of IFNB1 and interferon-stimulated genes ISG15, IFIT1/ISG56, CXCL10, OASL and CCL5/RANTES. Promotes establishment of an antiviral state by TLR3 ligand and TLR3-mediated chemokine induction following infection by hepatitis C virus. Acts as a restriction factor of Zika virus through direct interaction with the viral RNA via its C-terminal region. This chain is E3 ubiquitin-protein ligase TRIM56, found in Homo sapiens (Human).